The sequence spans 170 residues: Large ribosomal subunit protein uL5 (170 aa).

It belongs to the universal ribosomal protein uL5 family. In terms of assembly, part of the 50S ribosomal subunit; contacts the 5S rRNA and probably tRNA. Forms a bridge to the 30S subunit in the 70S ribosome.

In terms of biological role, this is one of the proteins that bind and probably mediate the attachment of the 5S RNA into the large ribosomal subunit, where it forms part of the central protuberance. In the 70S ribosome it contacts protein S13 of the 30S subunit (bridge B1b), connecting the 2 subunits; this bridge is implicated in subunit movement. May contact the P site tRNA; the 5S rRNA and some of its associated proteins might help stabilize positioning of ribosome-bound tRNAs. The chain is Large ribosomal subunit protein uL5 from Methanobrevibacter smithii (strain ATCC 35061 / DSM 861 / OCM 144 / PS).